The sequence spans 727 residues: Ubiquitin carboxyl-terminal hydrolase BAP1 (727 aa).

The region spanning glycine 4–proline 235 is the UCH catalytic domain. The short motif at arginine 56–arginine 60 is the Arg-finger motif element. The active-site Nucleophile is cysteine 91. Histidine 169 (proton donor) is an active-site residue. Residues threonine 273 to threonine 351 form a disordered region. Serine 292 carries the phosphoserine modification. Residues cysteine 320 to serine 330 show a composition bias toward polar residues. Positions asparagine 363–tyrosine 366 match the HBM-like motif motif. Phosphoserine is present on residues serine 369 and serine 394. Disordered regions lie at residues glutamine 372–leucine 435 and serine 462–threonine 522. Acidic residues predominate over residues serine 394–valine 407. 2 stretches are compositionally biased toward polar residues: residues serine 426–leucine 435 and threonine 478–threonine 522. Threonine 491 carries the phosphothreonine modification. Phosphoserine is present on residues serine 519, serine 535, serine 583, and serine 595. The tract at residues leucine 573–glycine 622 is disordered. Residues serine 580–serine 595 are compositionally biased toward low complexity. Positions serine 594–serine 719 are interaction with BRCA1. The span at leucine 596 to glycine 612 shows a compositional bias: basic and acidic residues. Positions lysine 628 to lysine 659 form a coiled coil. The segment at glutamate 640–glycine 684 is interaction with YY1. A ULD domain is found at asparagine 668–valine 696. The interaction with nucleosomal DNA forming a DNA clamp with ASXL1 stretch occupies residues arginine 697–arginine 699. Residues arginine 697–arginine 720 carry the Classical bipartite Nuclear localization signal (NLS) motif. Positions valine 702–glutamine 727 are disordered. The positively charged C-terminal extension (CTE) stretch occupies residues arginine 711–glutamine 727. The short motif at arginine 715 to arginine 720 is the Nuclear localization signal element. Positions arginine 715–tyrosine 722 match the Non-classical PY-nuclear localization signal (PY-NLS) motif.

The protein belongs to the peptidase C12 family. BAP1 subfamily. In terms of assembly, core component of the polycomb repressive deubiquitinase (PR-DUB) complex, at least composed of BAP1, one of ASXL1, ASXL2 or (probably) ASXL3, and one of MBD5 or MBD6. The PR-DUB core associates with a number of accessory proteins, including FOXK1, FOXK2, KDM1B, HCFC1, YY1 and OGT; KDM1B specifically associates with ASXL2 PR-DUB complexes. The BAP1 deubiquitinase activity is not required for PR-DUB assembly. Homodimerize (via coiled-coil hinge-region between the UCH and ULD domains) to mediate assembly of 2 copies of the BAP1-ASXL heterodimer into a bisymmetric tetramer; dimerization enhances association with nucleosomes. The PR-DUB complex associates with nucleosomes to mediate deubiquitination of 'lys-120' of histone H2AK118ub1 substrates; the association requires the positively charged C-terminal tail of BAP1. Interacts (via ULD domain) with ASXL1 (via DEUBAD domain); the interaction is direct and forms a ubiquitin binding cleft. The interaction with ASXL1 stabilizes BAP1 but is not required for nucleosome binding. Associates (via C-terminus) with nucleosome and chromatosome complexes through direct interaction with DNA and the histone3/4 dimer; this association displaces the histone-2A C-terminal tail, extending and orienting the H2AK118ub1 substrate towards the BAP1 deubiquitinase active site. Also interacts (via arginine finger) directly with the histone H2A-H2B acidic patch; this interaction is not critical for nucleosome-chromatosome association but may play a role in orienting the H2AK118ub1 substrate towards the PR-DUB complex active site. Interacts with BRCA1 (via the RING finger). Interacts (via HBM-like motif) with HCFC1. Interacts (via a C-terminal region overlapping the ULD domain) with YY1; the interaction is direct and requires the interaction with HCFC1. Interacts (when phosphorylated at Thr-491) with FOXK1. Interacts (when phosphorylated at Thr-491) with FOXK2; leading to recruitment of the PR-DUB complex and repression of FOXK2 target genes. Interacts (via non-classical PY-NLS) with TNPO1/transportin-1 (via HEAT repeats 8-12); the interaction is direct, mediates BAP1 nuclear localization and disrupts BAP1 homodimerization. Interacts (via C-terminus) with KPNA1/importin alpha5 and KPNA2/importin alpha1; these interactions can contribute to BAP1 nuclear localization but are less important than the interaction with TNPO1/transportin-1. The interaction with TNPO1/transportin-1 disrupts homodimerization and blocks ubiquitination by UBE2O. Ubiquitinated: monoubiquitinated at multiple sites within its nuclear localization signal (NLS) BY UBE2O, leading to cytoplasmic retention. Able to mediate autodeubiquitination via intramolecular interactions to counteract cytoplasmic retention. Monoubiquitinated on at least 4 sites near or within its PY-NLS.

Its subcellular location is the cytoplasm. The protein resides in the nucleus. It is found in the chromosome. The enzyme catalyses Thiol-dependent hydrolysis of ester, thioester, amide, peptide and isopeptide bonds formed by the C-terminal Gly of ubiquitin (a 76-residue protein attached to proteins as an intracellular targeting signal).. Functionally, deubiquitinating enzyme that plays a key role in chromatin by mediating deubiquitination of histone H2A and HCFC1. Catalytic component of the polycomb repressive deubiquitinase (PR-DUB) complex, a complex that specifically mediates deubiquitination of histone H2A monoubiquitinated at 'Lys-120' (H2AK119ub1). Does not deubiquitinate monoubiquitinated histone H2B. The PR-DUB complex is an epigenetic regulator of gene expression and acts as a transcriptional coactivator, affecting genes involved in development, cell communication, signaling, cell proliferation and cell viability. Antagonizes PRC1 mediated H2AK119ub1 monoubiquitination. As part of the PR-DUB complex, associates with chromatin enriched in histone marks H3K4me1, H3K4me3, and H3K27Ac, but not in H3K27me3. Acts as a regulator of cell growth by mediating deubiquitination of HCFC1 N-terminal and C-terminal chains, with some specificity toward 'Lys-48'-linked polyubiquitin chains compared to 'Lys-63'-linked polyubiquitin chains. Deubiquitination of HCFC1 does not lead to increase stability of HCFC1. Interferes with the BRCA1 and BARD1 heterodimer activity by inhibiting their ability to mediate ubiquitination and autoubiquitination. It however does not mediate deubiquitination of BRCA1 and BARD1. Able to mediate autodeubiquitination via intramolecular interactions to counteract monoubiquitination at the nuclear localization signal (NLS), thereby protecting it from cytoplasmic sequestration. Acts as a tumor suppressor. Negatively regulates epithelial-mesenchymal transition (EMT) of trophoblast stem cells during placental development by regulating genes involved in epithelial cell integrity, cell adhesion and cytoskeletal organization. The protein is Ubiquitin carboxyl-terminal hydrolase BAP1 (Bap1) of Rattus norvegicus (Rat).